We begin with the raw amino-acid sequence, 407 residues long: Cell division control protein 12 (407 aa).

Serine 2 carries the N-acetylserine modification. Residues 31-314 (EGGTFTVMLC…ETYRRLRLEG (284 aa)) enclose the Septin-type G domain. The G1 motif stretch occupies residues 41-48 (GESGLGKT). GTP-binding positions include 41–48 (GESGLGKT), threonine 75, glycine 101, 180–188 (KADTLTAQE), glycine 247, and arginine 263. The G3 motif stretch occupies residues 98–101 (DTPG). The segment at 179-182 (AKAD) is G4 motif. Positions 344 to 406 (EEENALKKYF…KSLQVKKSHL (63 aa)) form a coiled coil.

It belongs to the TRAFAC class TrmE-Era-EngA-EngB-Septin-like GTPase superfamily. Septin GTPase family. As to quaternary structure, component of the septin complex which consists of CDC3, CDC10, CDC11, CDC12 and probably SHS1 and rearranges to a cortical collar of highly ordered filaments at the mother-bud-neck. A complex formed by CDC3, CDC10, CDC11 and CDC12 is capable of forming long filaments in vitro and the components seem to be present in a 2:2:2:2 arrangement in vivo. The filaments are proposed to be formed by the end-to-end polymerization of CDC3-CDC12-CDC11 complexes with CDC10 serving as a bridge to bundle the polymers into paired filaments. Component of the GIN4 complex composed of at least BNI5, CDC3, CDC10, CDC11, CDC12, GIN4, NAP1 and SHS1. Self-associates. Interacts with SYP1.

The protein resides in the membrane. It localises to the bud neck. Its function is as follows. Septins are GTPases involved in cytokinesis that assemble early in the cell cycle as a patch at the incipient bud site and form a ring approximate 15 minutes before bud emergence, which transforms into an hour-glass shaped collar of cortical filaments that spans both sides of the mother-bud neck. This collar persists until just before cytokinesis, when it splits into two rings that occupy opposite sides of the neck. The septins at the bud neck serve as a structural scaffold that recruits different components involved in diverse processes at specific stages during the cell cycle. Many proteins bind asymmetrically to the septin collar. The septin assembly is regulated by protein kinases GIN4 and/or CLA4. May act by recruiting MYO1 and HOF1, a protein involved in septation, to the site of cleavage. Septins are also involved in cell morphogenesis, bud site selection, chitin deposition, cell cycle regulation, cell compartmentalization and spore wall formation. This is Cell division control protein 12 (CDC12) from Saccharomyces cerevisiae (strain ATCC 204508 / S288c) (Baker's yeast).